A 624-amino-acid chain; its full sequence is LEAF RUST 10 DISEASE-RESISTANCE LOCUS RECEPTOR-LIKE PROTEIN KINASE-like 2.2 (624 aa).

A signal peptide spans 1 to 30 (MDYLSSMGSQTARFCLILLFLFYYLPCALS). Over 31-263 (QDDLWGCGTP…IPNTRSILIT (233 aa)) the chain is Extracellular. Residues Asn-45, Asn-75, Asn-85, Asn-95, Asn-150, and Asn-164 are each glycosylated (N-linked (GlcNAc...) asparagine). The chain crosses the membrane as a helical span at residues 264 to 284 (IGQVVGFHVFIIVVMIIAFLF). Over 285–624 (WRRKKVNDLR…EEDSSIYSEV (340 aa)) the chain is Cytoplasmic. In terms of domain architecture, Protein kinase spans 317 to 599 (KSFTEVVGRG…SLDPPPKPLL (283 aa)). ATP contacts are provided by residues 323–331 (VGRGGFGTV) and Lys-345. Catalysis depends on Asp-434, which acts as the Proton acceptor. Residues 587–624 (NLDSLDPPPKPLLHMPMQNNNAESSQPSEEDSSIYSEV) form a disordered region. Over residues 603-624 (MQNNNAESSQPSEEDSSIYSEV) the composition is skewed to polar residues.

This sequence belongs to the protein kinase superfamily. Ser/Thr protein kinase family.

Its subcellular location is the membrane. It carries out the reaction L-seryl-[protein] + ATP = O-phospho-L-seryl-[protein] + ADP + H(+). It catalyses the reaction L-threonyl-[protein] + ATP = O-phospho-L-threonyl-[protein] + ADP + H(+). This chain is LEAF RUST 10 DISEASE-RESISTANCE LOCUS RECEPTOR-LIKE PROTEIN KINASE-like 2.2, found in Arabidopsis thaliana (Mouse-ear cress).